Reading from the N-terminus, the 230-residue chain is U2 small nuclear ribonucleoprotein A' (230 aa).

5 LRR repeats span residues 15–36 (SLRNNIFTNNSITKNMRLNADT), 48–69 (GDRELNLRGLQIPVIENLGVTE), 71–92 (HYTSLDLSDNEIRVMGGFPRLE), 93–114 (TLRTLLLSKNRITQINDVKNIA), and 115–136 (KLETLVLTQNGIATLGALESLK). The LRRCT domain maps to 149-187 (NPVQHVPRYRSYMISILPSLRMLDFQRVTQKERDEAEAM).

Belongs to the U2 small nuclear ribonucleoprotein A family. In terms of assembly, associated with the spliceosome.

The protein localises to the nucleus. Its function is as follows. Involved in pre-mRNA splicing. The sequence is that of U2 small nuclear ribonucleoprotein A' (LEA1) from Yarrowia lipolytica (strain CLIB 122 / E 150) (Yeast).